A 460-amino-acid chain; its full sequence is Proton extrusion protein PxcA (460 aa).

Residues 84–194 are disordered; sequence RLPDPEQNGS…KTNLDNSNAP (111 aa). Residues 114–136 are compositionally biased toward basic and acidic residues; it reads NDGKDAENGRQSRDPSILEKLEF. The span at 167–194 shows a compositional bias: polar residues; sequence LTSSQPEPSDPSIKTNLAKTNLDNSNAP. 4 consecutive transmembrane segments (helical) span residues 242–262, 337–357, 373–393, and 420–440; these read FLLL…HFLF, GLKN…LILI, IYGL…DVFV, and FIYG…KYWI.

This sequence belongs to the CemA family.

The protein localises to the cell inner membrane. In terms of biological role, required for H(+) efflux immediately after light irradiation to form a rapid H(+) concentration gradient across the thylakoid membranes. Together with PxcL, contributes to transient H(+) uptake following dark to light transition. This chain is Proton extrusion protein PxcA, found in Synechococcus sp. (strain JA-3-3Ab) (Cyanobacteria bacterium Yellowstone A-Prime).